Reading from the N-terminus, the 679-residue chain is Protein asunder (679 aa).

The stretch at 519–541 (RLKVNKTKDQYRLFYRELEQLIQ) forms a coiled coil. A disordered region spans residues 564 to 610 (GDASNKSDPSAAHLRSYTESPLSPERLEPTNSVNSSSSSILKASKRR). A Nuclear localization signal (NLS) motif is present at residues 604-610 (LKASKRR).

This sequence belongs to the Integrator subunit 13 family. As to quaternary structure, belongs to the multiprotein complex Integrator, at least composed of IntS1, IntS2, IntS3, IntS4, omd/IntS5, IntS6, defl/IntS7, IntS8, IntS9, IntS10, IntS11, IntS12, asun/IntS13, IntS14 and IntS15. The core complex associates with protein phosphatase 2A subunits mts/PP2A and Pp2A-29B, to form the Integrator-PP2A (INTAC) complex. In terms of processing, phosphorylated.

Its subcellular location is the nucleus. The protein resides in the cytoplasm. It localises to the perinuclear region. Its function is as follows. Component of the integrator complex, a multiprotein complex that terminates RNA polymerase II (Pol II) transcription in the promoter-proximal region of genes. The integrator complex provides a quality checkpoint during transcription elongation by driving premature transcription termination of transcripts that are unfavorably configured for transcriptional elongation: the complex terminates transcription by (1) catalyzing dephosphorylation of the C-terminal domain (CTD) of Pol II subunit Polr2A/Rbp1 and Spt5, and (2) degrading the exiting nascent RNA transcript via endonuclease activity. The integrator complex is also involved in the 3'-end processing of the U7 snRNA, and also the spliceosomal snRNAs U1, U2, U4 and U5. The polypeptide is Protein asunder (asun) (Drosophila mojavensis (Fruit fly)).